The chain runs to 1191 residues: Serine/threonine-protein kinase dkf-2 (1191 aa).

2 disordered regions span residues 11–48 (YTSM…TTTS) and 108–155 (MLSR…GGHV). Over residues 123–139 (TPDDHYSNPSDKRREVP) the composition is skewed to basic and acidic residues. Low complexity predominate over residues 140–150 (SIRSTSSNSSS). 2 consecutive Phorbol-ester/DAG-type zinc fingers follow at residues 314-364 (PHTL…PNNC) and 466-531 (PHTF…AKDC). The tract at residues 549 to 594 (VSEDRDDDLSLRSGSGGHKKAQNTPSAPLQGSEGSGSPGGAVVSFA) is disordered. In terms of domain architecture, PH spans 632–713 (LLKEGWIVHY…VYFVYSSLTD (82 aa)). The interval 730–786 (PSTVSSTDSGYLGSSGASSSCVRSREGSTVSSTITVDRTRRGGSTTSTENSEAESES) is disordered. Residues 738–751 (SGYLGSSGASSSCV) are compositionally biased toward low complexity. Positions 756–765 (GSTVSSTITV) are enriched in polar residues. Residues 773–786 (STTSTENSEAESES) are compositionally biased toward low complexity. Positions 891–1147 (IFAEEVLGSG…VAKAQSHIWM (257 aa)) constitute a Protein kinase domain. ATP-binding positions include 897-905 (LGSGQFGTV) and Lys920. Asp1014 (proton acceptor) is an active-site residue. Phosphoserine occurs at positions 1046 and 1050.

This sequence belongs to the protein kinase superfamily. CAMK Ser/Thr protein kinase family. PKD subfamily. Mg(2+) serves as cofactor. In terms of processing, phosphorylation on Ser-1046 is the dominant regulator of catalysis, phosphorylation on Ser-1050 has a lesser effect. Prolonged phosphorylation results in ubiquitination and degradation.

The protein resides in the cytoplasm. The protein localises to the membrane. It catalyses the reaction L-seryl-[protein] + ATP = O-phospho-L-seryl-[protein] + ADP + H(+). The enzyme catalyses L-threonyl-[protein] + ATP = O-phospho-L-threonyl-[protein] + ADP + H(+). Its activity is regulated as follows. Activated by DAG and phorbol esters. Phorbol-ester/DAG-type domain 1 binds phorbol ester with low affinity. Phorbol-ester/DAG-type domain 2 binds phorbol ester with high affinity and targets the kinase to the cell periphery, enabling phosphorylation and activation by colocalized tpa-1. Both domains 1 and 2 appear to bind DAG with equal affinity so may contribute equally to translocation and activation. Functionally, converts transient diacylglycerol (DAG) signals into prolonged physiological effects, downstream of PKC. Acts in the intestine to regulate both innate immunity by promoting activation of pmk-1 and also stress response and life span by acting as an upstream, negative regulator of the daf-16 transcription factor. This Caenorhabditis briggsae protein is Serine/threonine-protein kinase dkf-2.